The following is a 186-amino-acid chain: Elongation factor P (186 aa).

This sequence belongs to the elongation factor P family.

It localises to the cytoplasm. The protein operates within protein biosynthesis; polypeptide chain elongation. Its function is as follows. Involved in peptide bond synthesis. Stimulates efficient translation and peptide-bond synthesis on native or reconstituted 70S ribosomes in vitro. Probably functions indirectly by altering the affinity of the ribosome for aminoacyl-tRNA, thus increasing their reactivity as acceptors for peptidyl transferase. The chain is Elongation factor P from Shewanella woodyi (strain ATCC 51908 / MS32).